The following is a 393-amino-acid chain: Acetylornithine aminotransferase 1 (393 aa).

Residue R131 participates in N(2)-acetyl-L-ornithine binding. 215-218 (DEVQ) lines the pyridoxal 5'-phosphate pocket. K244 carries the N6-(pyridoxal phosphate)lysine modification. T272 serves as a coordination point for N(2)-acetyl-L-ornithine. Position 273 (T273) interacts with pyridoxal 5'-phosphate.

The protein belongs to the class-III pyridoxal-phosphate-dependent aminotransferase family. ArgD subfamily. In terms of assembly, homodimer. Requires pyridoxal 5'-phosphate as cofactor.

It is found in the cytoplasm. It carries out the reaction N(2)-acetyl-L-ornithine + 2-oxoglutarate = N-acetyl-L-glutamate 5-semialdehyde + L-glutamate. It participates in amino-acid biosynthesis; L-arginine biosynthesis; N(2)-acetyl-L-ornithine from L-glutamate: step 4/4. The chain is Acetylornithine aminotransferase 1 from Bordetella pertussis (strain Tohama I / ATCC BAA-589 / NCTC 13251).